A 69-amino-acid polypeptide reads, in one-letter code: DNA gyrase inhibitor YacG (69 aa).

Zn(2+)-binding residues include cysteine 7, cysteine 10, cysteine 26, and cysteine 30.

Belongs to the DNA gyrase inhibitor YacG family. In terms of assembly, interacts with GyrB. Zn(2+) serves as cofactor.

Inhibits all the catalytic activities of DNA gyrase by preventing its interaction with DNA. Acts by binding directly to the C-terminal domain of GyrB, which probably disrupts DNA binding by the gyrase. The polypeptide is DNA gyrase inhibitor YacG (Shewanella baltica (strain OS195)).